Reading from the N-terminus, the 266-residue chain is Short-chain dehydrogenase/reductase tropE (266 aa).

Residues Leu18, Asp69, and Asn96 each contribute to the NADP(+) site. Ser147 serves as the catalytic Proton donor. Positions 181, 185, and 216 each coordinate NADP(+). The active-site Proton acceptor is Tyr181. Lys185 acts as the Lowers pKa of active site Tyr in catalysis.

It belongs to the short-chain dehydrogenases/reductases (SDR) family.

The protein operates within secondary metabolite biosynthesis. In terms of biological role, short-chain dehydrogenase/reductase; part of the gene cluster that mediates the biosynthesis of the tropolone class of fungal maleic anhydrides. The pathway begins with the synthesis of 3-methylorcinaldehyde by the non-reducing polyketide synthase (PKS) tropA. 3-methylorcinaldehyde is the substrate for the FAD-dependent monooxygenase tropB to yield a dearomatized hydroxycyclohexadione. The 2-oxoglutarate-dependent dioxygenase tropC then performs the oxidative ring expansion to provide the first tropolone metabolite stipitaldehyde. Trop D converts stipitaldehyde into stipitacetal which is in turn converted to stipitalide by the short-chain dehydrogenase/reductase tropE. The next steps involve tropF, tropG, tropH, tropI and tropJ to form successive tropolone maleic anhydrides including stipitaldehydic, stipitatonic and stipitatic acids. This chain is Short-chain dehydrogenase/reductase tropE, found in Talaromyces stipitatus (strain ATCC 10500 / CBS 375.48 / QM 6759 / NRRL 1006) (Penicillium stipitatum).